The following is a 92-amino-acid chain: Tachykinin-2 (92 aa).

Residues 1–22 form the signal peptide; it reads MIRVGLILCCIFIVGVFEASSA. A propeptide spanning residues 23–37 is cleaved from the precursor; that stretch reads DDILTAHNLIKRSEV. Methionine 49 carries the post-translational modification Methionine amide. Positions 52 to 92 are excised as a propeptide; sequence SEELTRRLIQHPGSMSETSKRGPPKKGDFNPNELKPESNIC. The segment at 61–92 is disordered; that stretch reads QHPGSMSETSKRGPPKKGDFNPNELKPESNIC.

This sequence belongs to the tachykinin family. In terms of tissue distribution, expressed in the posterior salivary gland and more specifically in the mucus-secreting gland cells.

The protein resides in the secreted. Its function is as follows. Tachykinins are active peptides which excite neurons, evoke behavioral responses, are potent vasodilators and secretagogues, and contract (directly or indirectly) many smooth muscles. The sequence is that of Tachykinin-2 from Octopus vulgaris (Common octopus).